The chain runs to 275 residues: MTLQQQIIKALGAKPQINAEEEIRRSVDFLKSYLQTYPFIKSLVLGISGGQDSTLAGKLCQMAINELRQETRNESLQFIAVRLPYGVQADEQDCQDAIAFIQPDRVLTVNIKGAVLASEQALREAGIELSDFVRGNEKARERMKAQYSIAGMTSGVVVGTDHAAEAITGFFTKYGDGGTDINPLYRLNKRQGKQLLTALGCPEHLYKKAPTADLEDDRPSLPDEVALGVTYDNIDDYLEGKNLPEQVARTIENWYLKTEHKRRPPINVFDDFWKK.

An ATP-binding site is contributed by 46 to 53 (GISGGQDS). Mg(2+) is bound at residue Asp52. Deamido-NAD(+) is bound at residue Arg140. Residue Thr160 coordinates ATP. Glu165 contacts Mg(2+). 2 residues coordinate deamido-NAD(+): Lys173 and Asp180. The ATP site is built by Lys189 and Thr211. A deamido-NAD(+)-binding site is contributed by 260-261 (HK).

The protein belongs to the NAD synthetase family. As to quaternary structure, homodimer.

It carries out the reaction deamido-NAD(+) + NH4(+) + ATP = AMP + diphosphate + NAD(+) + H(+). It participates in cofactor biosynthesis; NAD(+) biosynthesis; NAD(+) from deamido-NAD(+) (ammonia route): step 1/1. Functionally, catalyzes the ATP-dependent amidation of deamido-NAD to form NAD. Uses ammonia as a nitrogen source. This chain is NH(3)-dependent NAD(+) synthetase, found in Shigella flexneri serotype 5b (strain 8401).